Here is a 238-residue protein sequence, read N- to C-terminus: Laccase-S (238 aa).

Plastocyanin-like domains follow at residues Asn-4–Ala-87 and His-100–Tyr-238. Residue Asn-8 is glycosylated (N-linked (GlcNAc...) asparagine). Cu cation contacts are provided by His-21, His-23, His-66, and His-68. Cys-74 and Cys-162 form a disulfide bridge. An N-linked (GlcNAc...) asparagine glycan is attached at Asn-165.

The protein belongs to the multicopper oxidase family. In terms of assembly, monomer. It depends on Cu cation as a cofactor.

The protein localises to the secreted. It catalyses the reaction 4 hydroquinone + O2 = 4 benzosemiquinone + 2 H2O. With respect to regulation, activity is strongly promoted by toluene. Activity is promoted by magnesium, potassium, cadmium, zinc, nickel, sodium, lead and manganese ions. Completely inhibited by IAA (cysteine protease inhibitor), PMSF (serine protease inhibitor), DEP (histidine protease inhibitor) and NAI (tyrosine protease inhibitor). Inhibited by ethanol, acetone, SDS, and EDTA. Activity is strongly inhibited by mercury ions. Also inhibited by lithium, aluminum, calcium, barium and iron ions. In terms of biological role, lignin degradation and detoxification of lignin-derived products. Has activity towards 2,2'-azino-bis(3-ethylbenzothiazoline-6-sulfonic acid) (ABTS). This chain is Laccase-S, found in Trametes hirsuta (White-rot fungus).